The chain runs to 332 residues: Holliday junction branch migration complex subunit RuvB (332 aa).

The tract at residues 1 to 182 (MNKNFIESNL…FAFTCRLEYY (182 aa)) is large ATPase domain (RuvB-L). ATP contacts are provided by residues Leu21, Arg22, Gly63, Lys66, Thr67, Thr68, 129-131 (EDF), Arg172, Tyr182, and Arg219. Thr67 is a binding site for Mg(2+). A small ATPAse domain (RuvB-S) region spans residues 183–253 (DPMILQKILL…VANRALTMLS (71 aa)). The interval 256–332 (EKGLDEMDKK…YQHIVGSSQR (77 aa)) is head domain (RuvB-H). DNA is bound by residues Arg311 and Arg316.

Belongs to the RuvB family. Homohexamer. Forms an RuvA(8)-RuvB(12)-Holliday junction (HJ) complex. HJ DNA is sandwiched between 2 RuvA tetramers; dsDNA enters through RuvA and exits via RuvB. An RuvB hexamer assembles on each DNA strand where it exits the tetramer. Each RuvB hexamer is contacted by two RuvA subunits (via domain III) on 2 adjacent RuvB subunits; this complex drives branch migration. In the full resolvosome a probable DNA-RuvA(4)-RuvB(12)-RuvC(2) complex forms which resolves the HJ.

It localises to the cytoplasm. It carries out the reaction ATP + H2O = ADP + phosphate + H(+). The RuvA-RuvB-RuvC complex processes Holliday junction (HJ) DNA during genetic recombination and DNA repair, while the RuvA-RuvB complex plays an important role in the rescue of blocked DNA replication forks via replication fork reversal (RFR). RuvA specifically binds to HJ cruciform DNA, conferring on it an open structure. The RuvB hexamer acts as an ATP-dependent pump, pulling dsDNA into and through the RuvAB complex. RuvB forms 2 homohexamers on either side of HJ DNA bound by 1 or 2 RuvA tetramers; 4 subunits per hexamer contact DNA at a time. Coordinated motions by a converter formed by DNA-disengaged RuvB subunits stimulates ATP hydrolysis and nucleotide exchange. Immobilization of the converter enables RuvB to convert the ATP-contained energy into a lever motion, pulling 2 nucleotides of DNA out of the RuvA tetramer per ATP hydrolyzed, thus driving DNA branch migration. The RuvB motors rotate together with the DNA substrate, which together with the progressing nucleotide cycle form the mechanistic basis for DNA recombination by continuous HJ branch migration. Branch migration allows RuvC to scan DNA until it finds its consensus sequence, where it cleaves and resolves cruciform DNA. This is Holliday junction branch migration complex subunit RuvB from Protochlamydia amoebophila (strain UWE25).